Reading from the N-terminus, the 137-residue chain is Large ribosomal subunit protein uL16 (137 aa).

It belongs to the universal ribosomal protein uL16 family. Part of the 50S ribosomal subunit.

Functionally, binds 23S rRNA and is also seen to make contacts with the A and possibly P site tRNAs. The protein is Large ribosomal subunit protein uL16 of Anaplasma phagocytophilum (strain HZ).